A 1186-amino-acid polypeptide reads, in one-letter code: Myelin transcription factor 1-like protein (1186 aa).

Residues 1-21 are disordered; it reads MEVDTEEKRHRTRSKGVRVPV. A CCHHC-type 1 zinc finger spans residues 22 to 65; the sequence is EPAIQELFSCPTPGCDGSGHVSGKYARHRSVYGCPLAKKRKTQD. Zn(2+) is bound by residues cysteine 31, cysteine 36, histidine 49, and cysteine 55. 2 disordered regions span residues 56 to 175 and 220 to 247; these read PLAK…QMNC and RTES…GRKS. Over residues 86-169 the composition is skewed to acidic residues; the sequence is SVDECDDSDG…EEEEEEEENE (84 aa). The residue at position 250 (serine 250) is a Phosphoserine. 2 disordered regions span residues 342-372 and 449-513; these read SETN…GRTP and REKM…GCDG. Residues 343-357 show a composition bias toward polar residues; sequence ETNPQERNPQQNMNI. Basic and acidic residues-rich tracts occupy residues 361 to 372, 449 to 487, and 495 to 505; these read VRPEEDFPGRTP, REKM…DSHV, and DPSRTEKKESK. 2 consecutive CCHHC-type zinc fingers follow at residues 497–540 and 541–584; these read SRTE…PPEI and LAMH…KLAK. Positions 506, 511, 524, 530, 550, 555, 568, and 574 each coordinate Zn(2+). Disordered regions lie at residues 659-709 and 753-780; these read RAIA…GGGS and KPQD…MNKQ. The segment covering 666–683 has biased composition (basic and acidic residues); the sequence is QTRDISPKGYDDAKRYCK. Positions 685-709 are enriched in low complexity; it reads PSPSSSSTSSYAPSSSSNLSCGGGS. CCHHC-type zinc fingers lie at residues 896–939, 945–988, and 998–1041; these read LATS…GIRI, DKED…QKDG, and KSVK…MKKA. 12 residues coordinate Zn(2+): cysteine 905, cysteine 910, histidine 923, cysteine 929, cysteine 954, cysteine 959, histidine 972, cysteine 978, cysteine 1007, cysteine 1012, histidine 1025, and cysteine 1031. Positions 1056–1130 form a coiled coil; the sequence is SNGIENDEEI…LANLSQSLIH (75 aa).

The protein belongs to the MYT1 family. As to quaternary structure, interacts with SIN3B.

The protein localises to the nucleus. It localises to the chromosome. Transcription factor that plays a key role in neuronal differentiation by specifically repressing expression of non-neuronal genes during neuron differentiation. In contrast to other transcription repressors that inhibit specific lineages, mediates repression of multiple differentiation programs. Also represses expression of negative regulators of neurogenesis, such as members of the Notch signaling pathway, including HES1. The combination of three transcription factors, ASCL1, POU3F2/BRN2 and MYT1L, is sufficient to reprogram fibroblasts and other somatic cells into induced neuronal (iN) cells in vitro. Directly binds the 5'-AAGTT-3' core motif present on the promoter of target genes and represses transcription by recruiting a multiprotein complex containing SIN3B. The 5'-AAGTT-3' core motif is absent from the promoter of neural genes. This is Myelin transcription factor 1-like protein from Homo sapiens (Human).